The following is a 181-amino-acid chain: Protein GrpE (181 aa).

A compositionally biased stretch (polar residues) spans 1-20 (MENTQENPASQSAEENGSET). The segment at 1 to 39 (MENTQENPASQSAEENGSETQAAQDAAPAAEAADAALAE) is disordered. Residues 21–39 (QAAQDAAPAAEAADAALAE) are compositionally biased toward low complexity.

The protein belongs to the GrpE family. In terms of assembly, homodimer.

It localises to the cytoplasm. In terms of biological role, participates actively in the response to hyperosmotic and heat shock by preventing the aggregation of stress-denatured proteins, in association with DnaK and GrpE. It is the nucleotide exchange factor for DnaK and may function as a thermosensor. Unfolded proteins bind initially to DnaJ; upon interaction with the DnaJ-bound protein, DnaK hydrolyzes its bound ATP, resulting in the formation of a stable complex. GrpE releases ADP from DnaK; ATP binding to DnaK triggers the release of the substrate protein, thus completing the reaction cycle. Several rounds of ATP-dependent interactions between DnaJ, DnaK and GrpE are required for fully efficient folding. In Burkholderia multivorans (strain ATCC 17616 / 249), this protein is Protein GrpE.